The following is a 637-amino-acid chain: Early transcription factor 70 kDa subunit (637 aa).

Residues 32–185 form the Helicase ATP-binding domain; it reads RTIIDENRSV…GHIIDLMSEE (154 aa). An ATP-binding site is contributed by 45–52; the sequence is HIMGSGKT. The short motif at 135–138 is the DEXH box element; the sequence is DEAH. A Helicase C-terminal domain is found at 327–507; that stretch reads KFKYFINRIQ…VLPFDIKKLL (181 aa).

It belongs to the helicase family. VETF subfamily. Heterodimer of a 70 kDa and a 82 kDa subunit. Part of the early transcription complex composed of ETF, RAP94/OPG109, and the DNA-directed RNA polymerase.

It is found in the virion. Functionally, acts with RNA polymerase to initiate transcription from early gene promoters. Is recruited by the RPO-associated protein of 94 kDa RAP94/OPG109 to form the early transcription complex, which also contains the core RNA polymerase. ETF heterodimer binds to early gene promoters. This chain is Early transcription factor 70 kDa subunit (OPG118), found in Vaccinia virus (strain Ankara) (VACV).